Consider the following 386-residue polypeptide: Bifunctional desaturase/conjugase FADX (386 aa).

Residues Met1–Pro28 form a disordered region. A run of 2 helical transmembrane segments spans residues Leu65–Thr85 and Ile87–Gly107. The short motif at His108 to His112 is the Histidine box-1 element. The Histidine box-2 motif lies at His144–His148. 3 helical membrane-spanning segments follow: residues Ala182–Ser202, Ile228–Ala248, and Gly250–Val270. Positions His318–His322 match the Histidine box-3 motif.

The protein belongs to the fatty acid desaturase type 1 family. Expressed exclusively in developing seeds.

The protein resides in the endoplasmic reticulum membrane. It carries out the reaction a (9Z,12Z)-octadecadienoyl-containing glycerolipid + 2 Fe(II)-[cytochrome b5] + O2 + 2 H(+) = a (9Z,11E,13E)-octadecatrienoyl-containing glycerolipid + 2 Fe(III)-[cytochrome b5] + 2 H2O. The catalysed reaction is (9Z,12Z,15Z)-octadecatrienoyl-containing glycerolipid + 2 Fe(II)-[cytochrome b5] + O2 + 2 H(+) = a (9Z,11E,13E,15Z)-octadecatetraenoyl-containing glycerolipid + 2 Fe(III)-[cytochrome b5] + 2 H2O. It catalyses the reaction a (9Z)-octadecenoyl-containing glycerolipid + 2 Fe(II)-[cytochrome b5] + O2 + 2 H(+) = a (9Z,12E)-octadecadienoyl-containing glycerolipid + 2 Fe(III)-[cytochrome b5] + 2 H2O. The enzyme catalyses a (9Z)-hexadecenoyl-containing glycerolipid + 2 Fe(II)-[cytochrome b5] + O2 + 2 H(+) = a (9Z,12E)-hexadecadienoyl-containing glycerolipid + 2 Fe(III)-[cytochrome b5] + 2 H2O. It participates in lipid metabolism; polyunsaturated fatty acid biosynthesis. Functionally, converts linoleic acid to alpha-eleostearic acid (18:3(9Z,11E,13E)) and alpha-linolenic acid to alpha-parinaric acid (18:4(9Z,11E,13E,15Z)). Converts a single cis double bond at carbon 12 to two conjugated trans bonds at positions 11 and 13. Can also act as a 12(E) desaturase when acting on the monounsaturated fatty acids oleate and palmitoleate, stereoselectively introducing a trans double bond. The sequence is that of Bifunctional desaturase/conjugase FADX from Vernicia fordii (Tung).